We begin with the raw amino-acid sequence, 130 residues long: MVMLDLLSNALTAIKNAEAMGKRQVVIWPVNKLIYYTLRVLQRYGYVGEIEYIDDGRGGKYVVQLLGKINDIGAIRPRFPVKYREIVEWEQKYLPARQIGILVISTSQGVMSHLEAKEKKIGGVLLAYVY.

This sequence belongs to the universal ribosomal protein uS8 family. Part of the 30S ribosomal subunit.

One of the primary rRNA binding proteins, it binds directly to 16S rRNA central domain where it helps coordinate assembly of the platform of the 30S subunit. The protein is Small ribosomal subunit protein uS8 of Pyrobaculum calidifontis (strain DSM 21063 / JCM 11548 / VA1).